Reading from the N-terminus, the 514-residue chain is MRGGPCGGYPRRMTAIPDSTVGTNTAVAGLESTFADELGALTVPWQGAHAPDPTLLVLNEQLAASLRLDVQTLRSEDGVGVLSGSTAPAGAKPVAMAYAGHQFGGYAPLLGDGRALLLGELTSSDGQRVDLHLKGSGPTPFSRGGDGFAVIGPMLREYLVSEAMYALGIPTTRALSVVATGQNVHRYGAEPGAVLARVAASHLRVGTFEYAVRQGEVLQPLADYAIARHYPELTELPPGRDGNRYLSFFEAVVEAQASLVAKWMLTGFVHGVMNTDNTTISGETIDYGPCAFLDAFDPAAVFSSIDHGGRYAFGNQPVVLKWNLARLAETLLTLFDSTPDDAITAVSAVLATFDERYDGHYAAGMAAKLGLAGELVDRALVDDLLTLLEEHGADWTGTFRALADELRGHSTPLDGLVPREHIGPWLERWRGDLTKHGRGAAETADAMDCVNPLYIPRNHQLDAALRAATDGRLAPFEKLLEVVTHPFDRRDEWSDYTTPAPPSFSKSFQTFCGT.

8 residues coordinate ATP: Gly111, Gly113, Arg114, Lys134, Asp146, Gly147, Arg197, and Arg204. Catalysis depends on Asp276, which acts as the Proton acceptor. Residues Asn277 and Asp286 each coordinate Mg(2+). Asp286 is an ATP binding site.

The protein belongs to the SELO family. Requires Mg(2+) as cofactor. The cofactor is Mn(2+).

It carries out the reaction L-seryl-[protein] + ATP = 3-O-(5'-adenylyl)-L-seryl-[protein] + diphosphate. The catalysed reaction is L-threonyl-[protein] + ATP = 3-O-(5'-adenylyl)-L-threonyl-[protein] + diphosphate. It catalyses the reaction L-tyrosyl-[protein] + ATP = O-(5'-adenylyl)-L-tyrosyl-[protein] + diphosphate. The enzyme catalyses L-histidyl-[protein] + UTP = N(tele)-(5'-uridylyl)-L-histidyl-[protein] + diphosphate. It carries out the reaction L-seryl-[protein] + UTP = O-(5'-uridylyl)-L-seryl-[protein] + diphosphate. The catalysed reaction is L-tyrosyl-[protein] + UTP = O-(5'-uridylyl)-L-tyrosyl-[protein] + diphosphate. Its function is as follows. Nucleotidyltransferase involved in the post-translational modification of proteins. It can catalyze the addition of adenosine monophosphate (AMP) or uridine monophosphate (UMP) to a protein, resulting in modifications known as AMPylation and UMPylation. This chain is Protein nucleotidyltransferase YdiU, found in Rhodococcus jostii (strain RHA1).